We begin with the raw amino-acid sequence, 1269 residues long: Phospholipase D A (1269 aa).

Residues Y55–T64 are compositionally biased toward polar residues. The disordered stretch occupies residues Y55 to S121. 2 stretches are compositionally biased toward low complexity: residues N65–S87 and N95–N114. The stretch at S131–H192 forms a coiled coil. The segment covering N222–A232 has biased composition (polar residues). 2 disordered regions span residues N222 to T269 and N300 to L320. Residues T233–T269 are compositionally biased toward low complexity. PLD phosphodiesterase domains are found at residues I435–R462 and E704–S731. Residues H440, K442, D447, H709, K711, and D716 contribute to the active site. The stretch at N803 to E835 forms a coiled coil. Composition is skewed to low complexity over residues I810 to S850, N859 to N906, and S934 to S943. 2 disordered regions span residues I810–P966 and S983–D1007. Pro residues predominate over residues L987 to L1003. Residues T1059–Q1096 adopt a coiled-coil conformation. Residues I1116–A1167 are disordered. Residues S1122–S1142 are compositionally biased toward low complexity. A compositionally biased stretch (polar residues) spans D1148 to S1162.

Belongs to the phospholipase D family.

The catalysed reaction is a 1,2-diacyl-sn-glycero-3-phosphocholine + H2O = a 1,2-diacyl-sn-glycero-3-phosphate + choline + H(+). With respect to regulation, inhibited by butan-1-ol. Its function is as follows. Plays a role in cell growth. Hydrolyzes membrane phospholipids, such as PtdCho free headgroup and PtdOH (phosphatidic acid; signaling molecule on its own). Involved in the inhibition of actin-based motility and endocytosis. Its inhibition causes complete collapse of F-actin organization. The polypeptide is Phospholipase D A (pldA) (Dictyostelium discoideum (Social amoeba)).